We begin with the raw amino-acid sequence, 211 residues long: Arginine exporter protein ArgO (211 aa).

6 consecutive transmembrane segments (helical) span residues 1–21, 37–57, 68–88, 111–131, 147–167, and 186–206; these read MLSY…PLGP, LMIA…GIFG, LLAL…FGAL, IIAT…DTFV, WFAL…ALLA, and LVGL…IHHI.

The protein belongs to the LysE/ArgO transporter (TC 2.A.75) family.

Its subcellular location is the cell inner membrane. It catalyses the reaction L-arginine(in) = L-arginine(out). Its function is as follows. Involved in the export of arginine. Important to control the intracellular level of arginine and the correct balance between arginine and lysine. The sequence is that of Arginine exporter protein ArgO from Enterobacter sp. (strain 638).